The sequence spans 1466 residues: Helicase ARIP4 (1466 aa).

Disordered regions lie at residues Met-1–Lys-137 and Asp-185–Asn-235. Positions Pro-11–Ser-49 are enriched in acidic residues. Over residues Thr-72–Ser-82 the composition is skewed to low complexity. The span at Lys-99–Lys-114 shows a compositional bias: basic residues. Residues Lys-114 and Lys-126 each participate in a glycyl lysine isopeptide (Lys-Gly) (interchain with G-Cter in SUMO2) cross-link. Over residues Glu-191–Val-200 the composition is skewed to basic and acidic residues. Residue Lys-271 forms a Glycyl lysine isopeptide (Lys-Gly) (interchain with G-Cter in SUMO2) linkage. One can recognise a Helicase ATP-binding domain in the interval Arg-291–Asp-511. ATP is bound at residue His-304–Thr-311. The short motif at Asp-462–His-465 is the DEAH box element. The short motif at Leu-550–Leu-554 is the LXXLL motif 1 element. Residues Ser-649–Leu-670 form a disordered region. Glycyl lysine isopeptide (Lys-Gly) (interchain with G-Cter in SUMO2) cross-links involve residues Lys-664, Lys-681, Lys-758, Lys-900, Lys-1013, and Lys-1017. One can recognise a Helicase C-terminal domain in the interval His-727–Leu-895. Disordered stretches follow at residues Gln-1026 to Ser-1045 and Ala-1120 to Asp-1170. Residues Ser-1135–Ser-1154 are compositionally biased toward polar residues. 2 positions are modified to phosphoserine: Ser-1168 and Ser-1171. Disordered stretches follow at residues Val-1184–Ser-1212 and Thr-1259–Gln-1281. Thr-1259 is subject to Phosphothreonine. Positions Leu-1328–Leu-1332 match the LXXLL motif 2 motif. The interval Ala-1444–Lys-1466 is disordered. The segment covering Asn-1451 to Lys-1466 has biased composition (acidic residues).

This sequence belongs to the SNF2/RAD54 helicase family. Interacts with AR via its N-terminus. Interacts with DYRK1A. Binds DNA and mononucleosomes, but does not seem to form large multiprotein complexes. Sumoylated. In terms of tissue distribution, expressed at relatively low level, with highest expression in testis, liver and kidney. In brain, it is expressed in hippocampal and cerebellar neurons. In testis, it is present at high level in Sertoli cell nuclei. Also present in Leydig cell (at protein level).

It localises to the nucleus. The enzyme catalyses ATP + H2O = ADP + phosphate + H(+). Its activity is regulated as follows. Enzyme activity is enhanced by dsDNA (double-stranded DNA) and ssDNA (single-stranded DNA). Functionally, DNA helicase that modulates androgen receptor (AR)-dependent transactivation in a promoter-dependent manner. Not able to remodel mononucleosomes in vitro. Acts as an AR-coregulator in Sertoli cells. The chain is Helicase ARIP4 (Rad54l2) from Mus musculus (Mouse).